We begin with the raw amino-acid sequence, 465 residues long: Flavin-containing monooxygenase FMO GS-OX-like 2 (465 aa).

18–23 (GAGAAG) is a binding site for FAD. 217–222 (GSSASG) lines the NADP(+) pocket.

The protein belongs to the FMO family. It depends on FAD as a cofactor.

Its function is as follows. Catalyzes the conversion of methylthioalkyl glucosinolates of any chain length into methylsulfinylalkyl glucosinolates. In Arabidopsis thaliana (Mouse-ear cress), this protein is Flavin-containing monooxygenase FMO GS-OX-like 2.